The following is a 342-amino-acid chain: Phosphate acyltransferase (342 aa).

This sequence belongs to the PlsX family. As to quaternary structure, homodimer. Probably interacts with PlsY.

Its subcellular location is the cytoplasm. It carries out the reaction a fatty acyl-[ACP] + phosphate = an acyl phosphate + holo-[ACP]. It participates in lipid metabolism; phospholipid metabolism. Its function is as follows. Catalyzes the reversible formation of acyl-phosphate (acyl-PO(4)) from acyl-[acyl-carrier-protein] (acyl-ACP). This enzyme utilizes acyl-ACP as fatty acyl donor, but not acyl-CoA. The sequence is that of Phosphate acyltransferase from Shewanella amazonensis (strain ATCC BAA-1098 / SB2B).